We begin with the raw amino-acid sequence, 236 residues long: DCN1-like protein 5 (236 aa).

Residues serine 9, serine 40, and serine 47 each carry the phosphoserine modification. The DCUN1 domain occupies 45–231; the sequence is FSSKKCLAWF…LLDEFVEWHK (187 aa).

As to quaternary structure, part of a complex that contains DCUN1D5, CUL1 and RBX1; this interaction is bridged by CUL1. Interacts (via the DCUN1 domain) with the unneddylated cullins: interacts with CUL1, CUL2, CUL3, CUL4A, CUL4B and CUL5; these interactions promote the cullin neddylation and the identity of the cullin dictates the affinity of the interaction. Interacts (via DCUN1 domain) with UBE2M (N-terminally acetylated form) and probably with UBE2F (N-terminally acetylated form). May also interact with regulators or subunits of cullin-RING ligases such as RBX1, RNF7, ELOB and DDB1; these interactions are bridged by cullins. Interacts with CAND1; this interaction is bridged by cullins and strongly inhibits the neddylation of cullins. These CAND-cullin-DCNL complexes can only be neddylated in the presence of a substrate adapter. Phosphorylation at Ser-40 is independent of cullin's interaction. Phosphorylated in response to both TICAM1 and MYD88 dependent Toll-like receptor (TLR) pathway activation. Phosphorylated in response to IL1B stimulation.

It localises to the nucleus. The protein localises to the cytoplasm. The protein resides in the cytoskeleton. It is found in the spindle. Its function is as follows. Contributes to the neddylation of all cullins by transferring NEDD8 from N-terminally acetylated NEDD8-conjugating E2s enzyme to different cullin C-terminal domain-RBX complexes which is necessary for the activation of cullin-RING E3 ubiquitin ligases (CRLs). May play a role in DNA damage response and may participate in cell proliferation and anchorage-independent cell growth. The protein is DCN1-like protein 5 (DCUN1D5) of Bos taurus (Bovine).